Consider the following 356-residue polypeptide: Aromatic dipeptide epimerase (356 aa).

Residues threonine 136 and 161–163 each bind substrate; that span reads KVK. Mg(2+) is bound by residues aspartate 191, glutamate 219, and aspartate 244. Substrate-binding positions include lysine 268 and 320 to 322; that span reads DLD.

Belongs to the mandelate racemase/muconate lactonizing enzyme family. Requires Mg(2+) as cofactor.

Its function is as follows. Has epimerase activity with a variety of hydrophobic dipeptides (in vitro). Enzyme activity is highest with L-Phe-L-Tyr, but is still relatively low, suggesting that L-Phe-L-Tyr is not the physiological substrate. This is Aromatic dipeptide epimerase from Herpetosiphon aurantiacus (strain ATCC 23779 / DSM 785 / 114-95).